Reading from the N-terminus, the 334-residue chain is Putative transport protein MTH_1211 (334 aa).

8 helical membrane-spanning segments follow: residues 24–44 (AIVVYPLWTMLFLGAVFAYIV), 60–80 (VSIILAMIVVIMPLVGILVFT), 84–104 (IINSAPSLLSLAGSIHVPGAG), 131–151 (YVVAILQSVPMISLQLFVFLS), 189–209 (VLLSIFYGHFLTALAIGLMAA), 220–240 (AILLGIMTGLFQLIPVIGPWA), 255–275 (ILRGVLVLIFGLFLSTIDIYL), and 289–309 (MIFLVGFLGGPVVWGVAGFIV).

The protein belongs to the autoinducer-2 exporter (AI-2E) (TC 2.A.86) family.

It localises to the cell membrane. The protein is Putative transport protein MTH_1211 of Methanothermobacter thermautotrophicus (strain ATCC 29096 / DSM 1053 / JCM 10044 / NBRC 100330 / Delta H) (Methanobacterium thermoautotrophicum).